The following is a 258-amino-acid chain: Proteasome subunit alpha (258 aa).

It belongs to the peptidase T1A family. The 20S proteasome core is composed of 14 alpha and 14 beta subunits that assemble into four stacked heptameric rings, resulting in a barrel-shaped structure. The two inner rings, each composed of seven catalytic beta subunits, are sandwiched by two outer rings, each composed of seven alpha subunits. The catalytic chamber with the active sites is on the inside of the barrel. Has a gated structure, the ends of the cylinder being occluded by the N-termini of the alpha-subunits. Is capped at one or both ends by the proteasome regulatory ATPase, PAN.

Its subcellular location is the cytoplasm. The formation of the proteasomal ATPase PAN-20S proteasome complex, via the docking of the C-termini of PAN into the intersubunit pockets in the alpha-rings, triggers opening of the gate for substrate entry. Interconversion between the open-gate and close-gate conformations leads to a dynamic regulation of the 20S proteasome proteolysis activity. Its function is as follows. Component of the proteasome core, a large protease complex with broad specificity involved in protein degradation. The protein is Proteasome subunit alpha of Aeropyrum pernix (strain ATCC 700893 / DSM 11879 / JCM 9820 / NBRC 100138 / K1).